The following is a 275-amino-acid chain: 4-hydroxy-tetrahydrodipicolinate reductase (275 aa).

NAD(+)-binding positions include 13–18 and 108–110; these read GAAGKM and GTT. The active-site Proton donor/acceptor is His-164. His-165 contributes to the (S)-2,3,4,5-tetrahydrodipicolinate binding site. Residue Lys-168 is the Proton donor of the active site. 174 to 175 provides a ligand contact to (S)-2,3,4,5-tetrahydrodipicolinate; it reads GT.

Belongs to the DapB family.

The protein localises to the cytoplasm. The enzyme catalyses (S)-2,3,4,5-tetrahydrodipicolinate + NAD(+) + H2O = (2S,4S)-4-hydroxy-2,3,4,5-tetrahydrodipicolinate + NADH + H(+). The catalysed reaction is (S)-2,3,4,5-tetrahydrodipicolinate + NADP(+) + H2O = (2S,4S)-4-hydroxy-2,3,4,5-tetrahydrodipicolinate + NADPH + H(+). It participates in amino-acid biosynthesis; L-lysine biosynthesis via DAP pathway; (S)-tetrahydrodipicolinate from L-aspartate: step 4/4. In terms of biological role, catalyzes the conversion of 4-hydroxy-tetrahydrodipicolinate (HTPA) to tetrahydrodipicolinate. In Acaryochloris marina (strain MBIC 11017), this protein is 4-hydroxy-tetrahydrodipicolinate reductase.